Reading from the N-terminus, the 133-residue chain is Lanmodulin (133 aa).

An N-terminal signal peptide occupies residues 1–21 (MAFRLSSAVLLAALVAAPAYA). Asp35, Asp37, Asp39, Thr41, Glu46, Asp59, Asp61, Asp63, Thr65, Glu70, Asp84, Asp86, Asp88, Thr90, Glu95, Asn108, Asp110, Asp112, Thr114, and Glu119 together coordinate Nd(3+). 4 consecutive EF-hand domains span residues 35–46 (DPDKDGTIDLKE), 59–70 (DPDKDGTLDAKE), 84–95 (DPDNDGTLDKKE), and 108–119 (NPDNDGTIDARE).

In terms of assembly, monomer.

It localises to the periplasm. High-affinity lanthanide (Ln)-binding protein. Shows 100 million-fold selectivity for La(3+) over Ca(2+). Binds 3 equiv of Ln(3+) with picomolar affinity and a fourth with approximately micromolar affinity. May be involved in receiving and then transporting lanthanides (such as La(3+), Nd(3+) and Sm(3+)) to a specific periplasmic destination. The polypeptide is Lanmodulin (Methylorubrum extorquens (strain ATCC 14718 / DSM 1338 / JCM 2805 / NCIMB 9133 / AM1) (Methylobacterium extorquens)).